Reading from the N-terminus, the 388-residue chain is L-lactate dehydrogenase (388 aa).

Residues 1–380 (MIISAASDYR…SADALSRVTR (380 aa)) enclose the FMN hydroxy acid dehydrogenase domain. A substrate-binding site is contributed by Tyr-24. FMN-binding residues include Ser-106 and Gln-127. Tyr-129 serves as a coordination point for substrate. Thr-155 contributes to the FMN binding site. Arg-164 is a substrate binding site. Lys-251 contacts FMN. His-275 functions as the Proton acceptor in the catalytic mechanism. A substrate-binding site is contributed by Arg-278. 306–330 (DSGIRSGLDVVRMLALGADAVLLGR) is a binding site for FMN.

It belongs to the FMN-dependent alpha-hydroxy acid dehydrogenase family. It depends on FMN as a cofactor.

The protein resides in the cell inner membrane. It catalyses the reaction (S)-lactate + A = pyruvate + AH2. Functionally, catalyzes the conversion of L-lactate to pyruvate. Is coupled to the respiratory chain. In Xanthomonas oryzae pv. oryzae (strain MAFF 311018), this protein is L-lactate dehydrogenase.